The sequence spans 707 residues: Elongation factor G (707 aa).

One can recognise a tr-type G domain in the interval 8-294; sequence ERYRNFGIIA…GVVDYLPSPL (287 aa). Residues 17 to 24, 92 to 96, and 146 to 149 contribute to the GTP site; these read AHIDAGKT, DTPGH, and NKMD.

It belongs to the TRAFAC class translation factor GTPase superfamily. Classic translation factor GTPase family. EF-G/EF-2 subfamily.

It is found in the cytoplasm. In terms of biological role, catalyzes the GTP-dependent ribosomal translocation step during translation elongation. During this step, the ribosome changes from the pre-translocational (PRE) to the post-translocational (POST) state as the newly formed A-site-bound peptidyl-tRNA and P-site-bound deacylated tRNA move to the P and E sites, respectively. Catalyzes the coordinated movement of the two tRNA molecules, the mRNA and conformational changes in the ribosome. This is Elongation factor G from Hyphomonas neptunium (strain ATCC 15444).